The chain runs to 564 residues: Phosphoinositide phospholipase C 3 (564 aa).

Residues 19–54 enclose the EF-hand domain; sequence TRQPPVSIKRLFEAYSRNGKMSFDELLRFVSEVQGE. One can recognise a PI-PLC X-box domain in the interval 106-250; sequence HDMKAPLSHY…LKGKILISTK (145 aa). Active-site residues include H121 and H167. In terms of domain architecture, PI-PLC Y-box spans 296–412; it reads RDLIAIHAAN…GYVKKPRILL (117 aa). Positions 406–539 constitute a C2 domain; that stretch reads KKPRILLDEH…KSGVRAVRLH (134 aa). Positions 450, 456, 509, 511, and 517 each coordinate Ca(2+).

Ca(2+) serves as cofactor. As to expression, expressed in leaves, roots and siliques, but not in flowers.

The protein resides in the cell membrane. The catalysed reaction is a 1,2-diacyl-sn-glycero-3-phospho-(1D-myo-inositol-4,5-bisphosphate) + H2O = 1D-myo-inositol 1,4,5-trisphosphate + a 1,2-diacyl-sn-glycerol + H(+). Its function is as follows. The production of the second messenger molecules diacylglycerol (DAG) and inositol 1,4,5-trisphosphate (IP3) is mediated by activated phosphatidylinositol-specific phospholipase C enzymes. This is Phosphoinositide phospholipase C 3 (PLC3) from Arabidopsis thaliana (Mouse-ear cress).